Here is a 173-residue protein sequence, read N- to C-terminus: Skp-like protein (173 aa).

The N-terminal stretch at 1 to 19 (MKKFLLLSLMSLASSTVFA) is a signal peptide.

Belongs to the Skp family.

This is Skp-like protein from Chlamydia muridarum (strain MoPn / Nigg).